We begin with the raw amino-acid sequence, 826 residues long: Dolichyl-diphosphooligosaccharide--protein glycosyltransferase subunit STT3B (826 aa).

The interval 1 to 60 (MAEPSAPESKHKSSLNSSPWSGLMALGNSRHGHHGPGAQCAHKAAGGAAPPKPAPAGLSG) is disordered. At Ala-2 the chain carries N-acetylalanine. The Cytoplasmic segment spans residues 2-41 (AEPSAPESKHKSSLNSSPWSGLMALGNSRHGHHGPGAQCA). Residues Ser-13, Ser-18, and Ser-29 each carry the phosphoserine modification. Low complexity predominate over residues 37-49 (GAQCAHKAAGGAA). Residues 42–86 (HKAAGGAAPPKPAPAGLSGGLSQPAGWQSLLSFTILFLAWLAGFS) traverse the membrane as a helical segment. Residues 87-173 (SRLFAVIRFE…VHIRDVCVFL (87 aa)) lie on the Lumenal side of the membrane. The DXD motif 1 motif lies at 101–103 (EFD). Residue Asp-103 participates in Mn(2+) binding. The chain crosses the membrane as a helical span at residues 174–192 (APTFSGLTSISTFLLTREL). The Cytoplasmic segment spans residues 193–194 (WN). The chain crosses the membrane as a helical span at residues 195-212 (QGAGLLAACFIAIVPGYI). Residues 213-223 (SRSVAGSFDNE) are Lumenal-facing. The Mn(2+) site is built by Asp-221 and Glu-223. The short motif at 221–223 (DNE) is the DXD motif 2 element. The chain crosses the membrane as a helical span at residues 224 to 243 (GIAIFALQFTYYLWVKSVKT). Over 244 to 245 (GS) the chain is Cytoplasmic. The helical transmembrane segment at 246-260 (VFWTMCCCLSYFYMV) threads the bilayer. Residues 261 to 265 (SAWGG) lie on the Lumenal side of the membrane. A helical transmembrane segment spans residues 266–282 (YVFIINLIPLHVFVLLL). The Cytoplasmic segment spans residues 283–287 (MQRYS). A helical transmembrane segment spans residues 288 to 313 (KRVYIAYSTFYIVGLILSMQIPFVGF). Topologically, residues 314–321 (QPIRTSEH) are lumenal. The helical transmembrane segment at 322-341 (MAAAGVFALLQAYAFLQYLR) threads the bilayer. At 342 to 350 (DRLTKQEFQ) the chain is on the cytoplasmic side. Residues 351-371 (TLFFLGVSLAAGAVFLSVIYL) traverse the membrane as a helical segment. Residues 372-410 (TYTGYIAPWSGRFYSLWDTGYAKIHIPIIASVSEHQPTT) are Lumenal-facing. Residues 402–405 (SVSE) carry the SVSE motif motif. Residues 411–433 (WVSFFFDLHILVCTFPAGLWFCI) form a helical membrane-spanning segment. Residues 434–439 (KNINDE) lie on the Cytoplasmic side of the membrane. A helical transmembrane segment spans residues 440-456 (RVFVALYAISAVYFAGV). At 457–460 (MVRL) the chain is on the lumenal side. Arg-459 is a dolichyl diphosphooligosaccharide binding site. A helical membrane pass occupies residues 461–482 (MLTLTPVVCMLSAIAFSNVFEH). At 483–526 (YLGDDMKRENPPVEDSSDEDDKRNQGNLYDKAGKVRKHATEQEK) the chain is on the cytoplasmic side. The tract at residues 490-509 (RENPPVEDSSDEDDKRNQGN) is disordered. A phosphoserine mark is found at Ser-498 and Ser-499. The helical transmembrane segment at 527-552 (TEEGLGPNIKSIVTMLMLMLLMMFAV) threads the bilayer. Residues 553 to 826 (HCTWVTSNAY…KGKKISKKTV (274 aa)) are Lumenal-facing. The interval 604-606 (WWD) is interacts with target acceptor peptide in protein substrate. The WWDYG motif signature appears at 604-608 (WWDYG). Tyr-609 serves as a coordination point for dolichyl diphosphooligosaccharide. 2 N-linked (GlcNAc...) asparagine glycosylation sites follow: Asn-616 and Asn-623. Asn-627 carries N-linked (GlcNAc...) (high mannose) asparagine glycosylation. The N-linked (GlcNAc...) asparagine glycan is linked to Asn-641. A DK motif motif is present at residues 671 to 678 (DINKFLWM).

The protein belongs to the STT3 family. In terms of assembly, component of the oligosaccharyltransferase (OST) complex. There are 2 OST complexes, OST-A and OST-B, which contain STT3A or STT3B as catalytic subunit, respectively. OST-A and OST-B contain common core subunits RPN1, RPN2, OST48, OST4, DAD1 and TMEM258, and OST-B contains either MAGT1 or TUSC3 as specific accessory subunit. The cofactor is Mg(2+). Requires Mn(2+) as cofactor. Expressed in heart, brain, placenta, lung, liver, muscle, kidney and pancreas. Expressed in skin fibroblasts (at protein level).

It localises to the endoplasmic reticulum. Its subcellular location is the endoplasmic reticulum membrane. It catalyses the reaction a di-trans,poly-cis-dolichyl diphosphooligosaccharide + L-asparaginyl-[protein] = N(4)-(oligosaccharide-(1-&gt;4)-N-acetyl-beta-D-glucosaminyl-(1-&gt;4)-N-acetyl-beta-D-glucosaminyl)-L-asparaginyl-[protein] + a di-trans,poly-cis-dolichyl diphosphate + H(+). It functions in the pathway protein modification; protein glycosylation. Functionally, catalytic subunit of the oligosaccharyl transferase (OST) complex that catalyzes the initial transfer of a defined glycan (Glc(3)Man(9)GlcNAc(2) in eukaryotes) from the lipid carrier dolichol-pyrophosphate to an asparagine residue within an Asn-X-Ser/Thr consensus motif in nascent polypeptide chains, the first step in protein N-glycosylation. N-glycosylation occurs cotranslationally and the complex associates with the Sec61 complex at the channel-forming translocon complex that mediates protein translocation across the endoplasmic reticulum (ER). All subunits are required for a maximal enzyme activity. This subunit contains the active site and the acceptor peptide and donor lipid-linked oligosaccharide (LLO) binding pockets. STT3B is present in a small subset of OST complexes (OST-B) and mediates both cotranslational and post-translational N-glycosylation of target proteins: STT3B-containing complexes are required for efficient post-translational glycosylation and while they are less competent than STT3A-containing complexes for cotranslational glycosylation, they have the ability to mediate glycosylation of some nascent sites that are not accessible for STT3A. STT3B-containing complexes also act post-translationally and mediate modification of skipped glycosylation sites in unfolded proteins. Plays a role in ER-associated degradation (ERAD) pathway that mediates ubiquitin-dependent degradation of misfolded endoplasmic reticulum proteins by mediating N-glycosylation of unfolded proteins, which are then recognized by the ERAD pathway and targeted for degradation. Mediates glycosylation of the disease variant AMYL-TTR 'Asp-38' of TTR at 'Asn-118', leading to its degradation. This Homo sapiens (Human) protein is Dolichyl-diphosphooligosaccharide--protein glycosyltransferase subunit STT3B.